The following is a 1122-amino-acid chain: Midnolin homolog (1122 aa).

The region spanning 69–143 (INLNISTTTG…IILIPNVETG (75 aa)) is the Ubiquitin-like domain. Residues 210–300 (GGASGSSINA…SGQRSSGRIG (91 aa)) are required for interaction with Pc. 8 disordered regions span residues 257–399 (VGGS…STLN), 596–630 (KHRH…HFFN), 645–677 (FATS…GAGA), 746–775 (GVVS…KSGS), 840–876 (APTT…RSKM), 886–905 (KCNS…ASGS), 922–955 (AATK…NGCT), and 1067–1122 (AAPA…DTAA). The segment covering 266–298 (SGTSSSSSSTSSSSSSSSSSSRTRSSGQRSSGR) has biased composition (low complexity). 2 stretches are compositionally biased toward basic residues: residues 300 to 310 (GHGHVHSHQHP) and 321 to 352 (SHGH…HHHN). Over residues 375-397 (PSSSGASGSAPATGTGQSQSSST) the composition is skewed to low complexity. A compositionally biased stretch (basic residues) spans 596-610 (KHRHYHGQGHGHGHG). 6 stretches are compositionally biased toward low complexity: residues 612–627 (GHSS…SSSH), 648–663 (SSSS…SSSP), 746–766 (GVVS…AASG), 856–867 (SGSSSTTSSGSG), 889–903 (SRAQ…TLAS), and 922–936 (AATK…SSHS). Polar residues-rich tracts occupy residues 937–954 (CCQT…SNGC) and 1071–1085 (NSIT…VNGN). A compositionally biased stretch (low complexity) spans 1086–1107 (TSTAPATAATSAAAAPTAAPPS).

Interacts with PRC1 complex member polycomb protein Pc; the interaction targets Pc for ubiquitin-independent proteasomal degradation. Does not interact with PRC1 members Ph, Psc or Sce so does not appear to be a member of the PRC1 complex. Interacts with 26S proteasome regulatory subunit Rpn10.

It localises to the nucleus. Its function is as follows. Facilitates ubiquitin-independent proteasomal degradation of polycomb protein Pc by interacting directly with the proteasome and recruiting Pc to it. The sequence is that of Midnolin homolog from Drosophila melanogaster (Fruit fly).